A 117-amino-acid chain; its full sequence is Small ribosomal subunit protein bS6 (117 aa).

Positions 96–117 are disordered; it reads HAEGPSVQMQKRDERDSRRERR. Basic and acidic residues predominate over residues 105 to 117; the sequence is QKRDERDSRRERR.

This sequence belongs to the bacterial ribosomal protein bS6 family.

In terms of biological role, binds together with bS18 to 16S ribosomal RNA. The chain is Small ribosomal subunit protein bS6 from Ruegeria pomeroyi (strain ATCC 700808 / DSM 15171 / DSS-3) (Silicibacter pomeroyi).